A 54-amino-acid polypeptide reads, in one-letter code: Lectin alpha-1 chain (54 aa).

Belongs to the leguminous lectin family. Tetramer of two alpha and two beta chains.

The sequence is that of Lectin alpha-1 chain from Lathyrus hirsutus (Rough pea).